Reading from the N-terminus, the 68-residue chain is Beta-defensin 1 (68 aa).

The signal sequence occupies residues 1–21 (MRTSYLLLFTLCLLLSEMASG). The propeptide occupies 22–32 (DNFLTGLGHRS). 3 disulfides stabilise this stretch: Cys37-Cys66, Cys44-Cys59, and Cys49-Cys67.

Belongs to the beta-defensin family. Monomer. Homodimer.

The protein localises to the secreted. It localises to the membrane. Its function is as follows. Has bactericidal activity. May act as a ligand for C-C chemokine receptor CCR6. Positively regulates the sperm motility and bactericidal activity in a CCR6-dependent manner. Binds to CCR6 and triggers Ca2+ mobilization in the sperm which is important for its motility. This Hylobates moloch (Silvery gibbon) protein is Beta-defensin 1 (DEFB1).